A 113-amino-acid chain; its full sequence is MVRSLEEIIYIIYSDDSVVNISLASARCDGGPRRPLSRRGEEARRARAPSYEEQESSSFFHSKAHFFMWGRESMSFVYLHSVESYSLQFHDRCASYNDTFYPTNFTPIYIHTI.

Positions 28–55 (CDGGPRRPLSRRGEEARRARAPSYEEQE) are disordered.

This is an uncharacterized protein from Human cytomegalovirus (strain AD169) (HHV-5).